A 321-amino-acid chain; its full sequence is Nod factor export ATP-binding protein I (321 aa).

Residues Leu-17–Tyr-247 enclose the ABC transporter domain. Gly-49–Thr-56 contacts ATP.

The protein belongs to the ABC transporter superfamily. Lipooligosaccharide exporter (TC 3.A.1.102) family. In terms of assembly, the complex is composed of two ATP-binding proteins (NodI) and two transmembrane proteins (NodJ).

It is found in the cell inner membrane. Its function is as follows. Part of the ABC transporter complex NodIJ involved in the export of the nodulation factors (Nod factors), the bacterial signal molecules that induce symbiosis and subsequent nodulation induction. Nod factors are LCO (lipo-chitin oligosaccharide), a modified beta-1,4-linked N-acetylglucosamine oligosaccharide. This subunit is responsible for energy coupling to the transport system. This chain is Nod factor export ATP-binding protein I, found in Ralstonia nicotianae (strain ATCC BAA-1114 / GMI1000) (Ralstonia solanacearum).